The chain runs to 160 residues: Cytochrome c-type biogenesis protein CcmE (160 aa).

The Cytoplasmic segment spans residues Met-1–Arg-9. The chain crosses the membrane as a helical; Signal-anchor for type II membrane protein span at residues Ile-10–Ala-30. Residues Met-31 to Ser-160 lie on the Periplasmic side of the membrane. Positions 123 and 127 each coordinate heme. The disordered stretch occupies residues Val-141–Ser-160.

Belongs to the CcmE/CycJ family.

It localises to the cell inner membrane. Its function is as follows. Heme chaperone required for the biogenesis of c-type cytochromes. Transiently binds heme delivered by CcmC and transfers the heme to apo-cytochromes in a process facilitated by CcmF and CcmH. In Dinoroseobacter shibae (strain DSM 16493 / NCIMB 14021 / DFL 12), this protein is Cytochrome c-type biogenesis protein CcmE.